Here is a 398-residue protein sequence, read N- to C-terminus: Tryptophan synthase beta chain (398 aa).

At Lys88 the chain carries N6-(pyridoxal phosphate)lysine.

This sequence belongs to the TrpB family. Tetramer of two alpha and two beta chains. The cofactor is pyridoxal 5'-phosphate.

The catalysed reaction is (1S,2R)-1-C-(indol-3-yl)glycerol 3-phosphate + L-serine = D-glyceraldehyde 3-phosphate + L-tryptophan + H2O. It functions in the pathway amino-acid biosynthesis; L-tryptophan biosynthesis; L-tryptophan from chorismate: step 5/5. Its function is as follows. The beta subunit is responsible for the synthesis of L-tryptophan from indole and L-serine. The protein is Tryptophan synthase beta chain of Histophilus somni (strain 2336) (Haemophilus somnus).